The following is a 684-amino-acid chain: Methionine--tRNA ligase (684 aa).

Positions 15 to 25 (PYANGAIHLGH) match the 'HIGH' region motif. Positions 146, 149, 159, and 162 each coordinate Zn(2+). The 'KMSKS' region signature appears at 331 to 335 (KMSKS). K334 provides a ligand contact to ATP. The 103-residue stretch at 582–684 (DFAKLDLRVA…SGVTAGMQVR (103 aa)) folds into the tRNA-binding domain.

This sequence belongs to the class-I aminoacyl-tRNA synthetase family. MetG type 1 subfamily. Homodimer. It depends on Zn(2+) as a cofactor.

The protein resides in the cytoplasm. It catalyses the reaction tRNA(Met) + L-methionine + ATP = L-methionyl-tRNA(Met) + AMP + diphosphate. Its function is as follows. Is required not only for elongation of protein synthesis but also for the initiation of all mRNA translation through initiator tRNA(fMet) aminoacylation. This is Methionine--tRNA ligase from Glaesserella parasuis serovar 5 (strain SH0165) (Haemophilus parasuis).